We begin with the raw amino-acid sequence, 20 residues long: Antifreeze protein (20 aa).

In terms of processing, N-glycosylated and O-glycosylated.

It is found in the secreted. It localises to the extracellular space. Functionally, antifreeze proteins bind to the surface of ice crystals and inhibit the growth of these crystals, this inhibition causes thermal hysteresis. Causes the shape of ice crystals to change from hexagonal to a bipyramidal shape with rugged facets. Inhibits recrystallization of ice crystals. This chain is Antifreeze protein, found in Antarctomyces psychrotrophicus.